A 217-amino-acid polypeptide reads, in one-letter code: Acyl-homoserine-lactone synthase (217 aa).

It belongs to the autoinducer synthase family.

It carries out the reaction a fatty acyl-[ACP] + S-adenosyl-L-methionine = an N-acyl-L-homoserine lactone + S-methyl-5'-thioadenosine + holo-[ACP] + H(+). Its function is as follows. Required for the synthesis of OHHL (N-(3-oxohexanoyl)-L-homoserine lactone), an autoinducer molecule which binds to ExpR and thus acts in virulence (soft rot disease) through the activation of genes for plant tissue macerating enzymes. This chain is Acyl-homoserine-lactone synthase (expI), found in Pectobacterium parmentieri.